The primary structure comprises 74 residues: Ubiquitin-like protein FUBI (74 aa).

It belongs to the ubiquitin family.

This chain is Ubiquitin-like protein FUBI (FAU), found in Bos taurus (Bovine).